A 383-amino-acid polypeptide reads, in one-letter code: Peroxisomal membrane protein PEX15 (383 aa).

The Cytoplasmic portion of the chain corresponds to methionine 1 to serine 331. Residues valine 332–leucine 349 form a helical membrane-spanning segment. Residues lysine 350–isoleucine 383 lie on the Lumenal side of the membrane.

As to quaternary structure, interacts with PEX6. Interacts with PEX19; targets PEX15 to the peroxisome. Phosphorylated.

It localises to the peroxisome membrane. Its subcellular location is the endoplasmic reticulum membrane. In terms of biological role, peroxisomal docking factor that anchors PEX1 and PEX6 to peroxisome membranes. PEX26 is therefore required for the formation of the PEX1-PEX6 AAA ATPase complex, a complex that mediates the extraction of the PEX5 receptor from peroxisomal membrane. This chain is Peroxisomal membrane protein PEX15 (PEX15), found in Saccharomyces cerevisiae (strain ATCC 204508 / S288c) (Baker's yeast).